The primary structure comprises 202 residues: Josephin-1 (202 aa).

Serine 15 carries the phosphoserine modification. The region spanning 23–202 is the Josephin domain; sequence PPQIYHEKQR…EAHQSWRADV (180 aa). Cysteine 36 functions as the Nucleophile in the catalytic mechanism. Histidine 139 serves as the catalytic Proton acceptor.

Interacts with beta-actin/ACTB. In terms of processing, monoubiquitinated. Ubiquitination activates deubiquitination activity in vitro.

It is found in the cell membrane. Its subcellular location is the cytoplasm. It catalyses the reaction Thiol-dependent hydrolysis of ester, thioester, amide, peptide and isopeptide bonds formed by the C-terminal Gly of ubiquitin (a 76-residue protein attached to proteins as an intracellular targeting signal).. Deubiquitinates monoubiquitinated probes (in vitro). When ubiquitinated, cleaves 'Lys-63'-linked and 'Lys-48'-linked poly-ubiquitin chains (in vitro), hence may act as a deubiquitinating enzyme. May increase macropinocytosis and suppress clathrin- and caveolae-mediated endocytosis. May enhance membrane dynamics and cell motility independently of its catalytic activity. This chain is Josephin-1 (JOSD1), found in Bos taurus (Bovine).